A 395-amino-acid chain; its full sequence is Succinyl-diaminopimelate desuccinylase (395 aa).

His74 lines the Zn(2+) pocket. The active site involves Asp76. Zn(2+) is bound at residue Asp107. Glu141 functions as the Proton acceptor in the catalytic mechanism. Zn(2+) is bound by residues Glu142, Glu170, and His368.

It belongs to the peptidase M20A family. DapE subfamily. As to quaternary structure, homodimer. Requires Zn(2+) as cofactor. Co(2+) is required as a cofactor.

The catalysed reaction is N-succinyl-(2S,6S)-2,6-diaminopimelate + H2O = (2S,6S)-2,6-diaminopimelate + succinate. Its pathway is amino-acid biosynthesis; L-lysine biosynthesis via DAP pathway; LL-2,6-diaminopimelate from (S)-tetrahydrodipicolinate (succinylase route): step 3/3. Catalyzes the hydrolysis of N-succinyl-L,L-diaminopimelic acid (SDAP), forming succinate and LL-2,6-diaminopimelate (DAP), an intermediate involved in the bacterial biosynthesis of lysine and meso-diaminopimelic acid, an essential component of bacterial cell walls. The protein is Succinyl-diaminopimelate desuccinylase of Brucella anthropi (strain ATCC 49188 / DSM 6882 / CCUG 24695 / JCM 21032 / LMG 3331 / NBRC 15819 / NCTC 12168 / Alc 37) (Ochrobactrum anthropi).